Here is a 429-residue protein sequence, read N- to C-terminus: Histidine--tRNA ligase (429 aa).

It belongs to the class-II aminoacyl-tRNA synthetase family. In terms of assembly, homodimer.

The protein resides in the cytoplasm. It catalyses the reaction tRNA(His) + L-histidine + ATP = L-histidyl-tRNA(His) + AMP + diphosphate + H(+). In Streptococcus pneumoniae (strain Taiwan19F-14), this protein is Histidine--tRNA ligase.